The primary structure comprises 693 residues: Polyribonucleotide nucleotidyltransferase (693 aa).

Residues Asp486 and Asp492 each coordinate Mg(2+). Residues 553 to 612 (PRFSSMRIDTEKIKDVIGKGGATIRSITEQTGTTIEIEDDGSVKIAATDKAAAANARRLI) enclose the KH domain. The 69-residue stretch at 622-690 (GRIYDAKVTK…RQGRVRLSIK (69 aa)) folds into the S1 motif domain.

The protein belongs to the polyribonucleotide nucleotidyltransferase family. Component of the RNA degradosome, which is a multiprotein complex involved in RNA processing and mRNA degradation. Mg(2+) is required as a cofactor.

The protein localises to the cytoplasm. It catalyses the reaction RNA(n+1) + phosphate = RNA(n) + a ribonucleoside 5'-diphosphate. In terms of biological role, involved in mRNA degradation. Catalyzes the phosphorolysis of single-stranded polyribonucleotides processively in the 3'- to 5'-direction. The chain is Polyribonucleotide nucleotidyltransferase from Dichelobacter nodosus (strain VCS1703A).